Consider the following 263-residue polypeptide: Hydroxyethylthiazole kinase (263 aa).

Substrate is bound at residue Met39. Lys115 and Thr160 together coordinate ATP. Position 187 (Gly187) interacts with substrate.

The protein belongs to the Thz kinase family. The cofactor is Mg(2+).

The catalysed reaction is 5-(2-hydroxyethyl)-4-methylthiazole + ATP = 4-methyl-5-(2-phosphooxyethyl)-thiazole + ADP + H(+). The protein operates within cofactor biosynthesis; thiamine diphosphate biosynthesis; 4-methyl-5-(2-phosphoethyl)-thiazole from 5-(2-hydroxyethyl)-4-methylthiazole: step 1/1. Catalyzes the phosphorylation of the hydroxyl group of 4-methyl-5-beta-hydroxyethylthiazole (THZ). This chain is Hydroxyethylthiazole kinase, found in Staphylococcus saprophyticus subsp. saprophyticus (strain ATCC 15305 / DSM 20229 / NCIMB 8711 / NCTC 7292 / S-41).